Consider the following 404-residue polypeptide: Probable RNA polymerase sigma-C factor (404 aa).

Positions Asp193–Val206 match the Polymerase core binding motif. Positions Leu362 to Ala381 form a DNA-binding region, H-T-H motif.

Belongs to the sigma-70 factor family.

Functionally, sigma factors are initiation factors that promote the attachment of RNA polymerase to specific initiation sites and are then released. The sequence is that of Probable RNA polymerase sigma-C factor (sigC) from Synechocystis sp. (strain ATCC 27184 / PCC 6803 / Kazusa).